The primary structure comprises 880 residues: Lon protease (880 aa).

Residues 1–37 (MADYNDKNYLLHMSGPDSDTGPGIENEDPRAVENPGH) are disordered. The span at 27 to 37 (EDPRAVENPGH) shows a compositional bias: basic and acidic residues. A Lon N-terminal domain is found at 57–251 (LPILPVRDVV…LVNTQLQREV (195 aa)). Position 404–411 (404–411 (GPPGVGKT)) interacts with ATP. The Lon proteolytic domain maps to 640–821 (KLMPGMALGL…DELLPLVFEG (182 aa)). Catalysis depends on residues Ser727 and Lys770. The span at 826–836 (GGVSGAGQAGD) shows a compositional bias: gly residues. Residues 826-880 (GGVSGAGQAGDKGGKSKAAAGKKDVVAARPAKPAAPARRRKDKTEDELPTAEAGA) are disordered. The span at 852–861 (AARPAKPAAP) shows a compositional bias: low complexity.

Belongs to the peptidase S16 family. As to quaternary structure, homohexamer. Organized in a ring with a central cavity.

The protein localises to the cytoplasm. The enzyme catalyses Hydrolysis of proteins in presence of ATP.. In terms of biological role, ATP-dependent serine protease that mediates the selective degradation of mutant and abnormal proteins as well as certain short-lived regulatory proteins. Required for cellular homeostasis and for survival from DNA damage and developmental changes induced by stress. Degrades polypeptides processively to yield small peptide fragments that are 5 to 10 amino acids long. Binds to DNA in a double-stranded, site-specific manner. This Desulfovibrio desulfuricans (strain ATCC 27774 / DSM 6949 / MB) protein is Lon protease.